A 92-amino-acid polypeptide reads, in one-letter code: UPF0213 protein M28_Spy1146 (92 aa).

The 77-residue stretch at lysine 4–alanine 80 folds into the GIY-YIG domain.

The protein belongs to the UPF0213 family.

This is UPF0213 protein M28_Spy1146 from Streptococcus pyogenes serotype M28 (strain MGAS6180).